A 338-amino-acid polypeptide reads, in one-letter code: Glycerol-3-phosphate dehydrogenase [NAD(P)+] (338 aa).

Positions 13, 14, and 108 each coordinate NADPH. The sn-glycerol 3-phosphate site is built by Lys-108, Gly-139, and Ser-141. Residue Ala-143 coordinates NADPH. Lys-194, Asp-247, Ser-257, Arg-258, and Asn-259 together coordinate sn-glycerol 3-phosphate. Lys-194 serves as the catalytic Proton acceptor. Arg-258 serves as a coordination point for NADPH. Residues Val-282 and Glu-284 each coordinate NADPH.

It is found in the cytoplasm. The catalysed reaction is sn-glycerol 3-phosphate + NAD(+) = dihydroxyacetone phosphate + NADH + H(+). It catalyses the reaction sn-glycerol 3-phosphate + NADP(+) = dihydroxyacetone phosphate + NADPH + H(+). The protein operates within membrane lipid metabolism; glycerophospholipid metabolism. Functionally, catalyzes the reduction of the glycolytic intermediate dihydroxyacetone phosphate (DHAP) to sn-glycerol 3-phosphate (G3P), the key precursor for phospholipid synthesis. The sequence is that of Glycerol-3-phosphate dehydrogenase [NAD(P)+] from Streptococcus pyogenes serotype M6 (strain ATCC BAA-946 / MGAS10394).